We begin with the raw amino-acid sequence, 437 residues long: Probable exopolygalacturonase C (437 aa).

Residues 1-21 (MLITKTAFLAFLLSSVPLAHG) form the signal peptide. Residues asparagine 25, asparagine 42, asparagine 82, asparagine 99, and asparagine 149 are each glycosylated (N-linked (GlcNAc...) asparagine). PbH1 repeat units follow at residues 215 to 236 (GTNI…AVGS) and 238 to 259 (SHNI…SIGS). Aspartate 229 functions as the Proton donor in the catalytic mechanism. Histidine 253 is an active-site residue. N-linked (GlcNAc...) asparagine glycosylation occurs at asparagine 269. PbH1 repeat units follow at residues 270 to 291 (ITNL…RFKS) and 299 to 320 (VKNV…FVTQ). Residues asparagine 301 and asparagine 311 are each glycosylated (N-linked (GlcNAc...) asparagine). Cysteine 386 and cysteine 392 are disulfide-bonded. Residues asparagine 428 and asparagine 431 are each glycosylated (N-linked (GlcNAc...) asparagine).

The protein belongs to the glycosyl hydrolase 28 family.

The protein localises to the secreted. The enzyme catalyses [(1-&gt;4)-alpha-D-galacturonosyl](n) + H2O = alpha-D-galacturonate + [(1-&gt;4)-alpha-D-galacturonosyl](n-1). Specific in hydrolyzing the terminal glycosidic bond of polygalacturonic acid and oligogalacturonates. The sequence is that of Probable exopolygalacturonase C (pgxC) from Aspergillus flavus (strain ATCC 200026 / FGSC A1120 / IAM 13836 / NRRL 3357 / JCM 12722 / SRRC 167).